The following is a 247-amino-acid chain: Adenylate kinase (247 aa).

42–47 (GAGKGT) is an ATP binding site. The interval 62–91 (ATGDMLRAQVTAKTELGVQAKKIMDQGGLV) is NMP. Residues Thr-63, Arg-68, 89–91 (GLV), 118–121 (GFPR), and Gln-125 each bind AMP. Residues 159-196 (GRLVHPASGRSYHKLFNPPKKEMTDDQTGEPLVQRSDD) are LID. ATP is bound by residues Arg-160 and 169 to 170 (SY). Residues 169-191 (SYHKLFNPPKKEMTDDQTGEPLV) are disordered. Arg-193 and Arg-204 together coordinate AMP. Residue Gln-232 coordinates ATP.

It belongs to the adenylate kinase family. AK2 subfamily. Monomer.

It is found in the cytoplasm. The protein localises to the cytosol. Its subcellular location is the mitochondrion intermembrane space. It catalyses the reaction AMP + ATP = 2 ADP. Functionally, catalyzes the reversible transfer of the terminal phosphate group between ATP and AMP. Plays an important role in cellular energy homeostasis and in adenine nucleotide metabolism. Adenylate kinase activity is critical for regulation of the phosphate utilization and the AMP de novo biosynthesis pathways. This chain is Adenylate kinase, found in Meyerozyma guilliermondii (strain ATCC 6260 / CBS 566 / DSM 6381 / JCM 1539 / NBRC 10279 / NRRL Y-324) (Yeast).